Here is a 404-residue protein sequence, read N- to C-terminus: Argininosuccinate synthase (404 aa).

ATP is bound by residues 10 to 18 and Ala-37; that span reads AYSGGLDTS. The L-citrulline site is built by Tyr-90 and Ser-95. Gly-120 is an ATP binding site. L-aspartate contacts are provided by Thr-122, Asn-126, and Asp-127. Residue Asn-126 participates in L-citrulline binding. L-citrulline is bound by residues Arg-130, Ser-181, Ser-190, Glu-266, and Tyr-278. A disordered region spans residues 173 to 200; that stretch reads DKRGESPFSTDANLLHTSSEGKVLEDPW. A compositionally biased stretch (polar residues) spans 179 to 192; that stretch reads PFSTDANLLHTSSE.

Belongs to the argininosuccinate synthase family. Type 1 subfamily. Homotetramer.

The protein resides in the cytoplasm. The enzyme catalyses L-citrulline + L-aspartate + ATP = 2-(N(omega)-L-arginino)succinate + AMP + diphosphate + H(+). It participates in amino-acid biosynthesis; L-arginine biosynthesis; L-arginine from L-ornithine and carbamoyl phosphate: step 2/3. The protein is Argininosuccinate synthase of Novosphingobium aromaticivorans (strain ATCC 700278 / DSM 12444 / CCUG 56034 / CIP 105152 / NBRC 16084 / F199).